The following is a 119-amino-acid chain: Large ribosomal subunit protein bL20 (119 aa).

It belongs to the bacterial ribosomal protein bL20 family.

Its function is as follows. Binds directly to 23S ribosomal RNA and is necessary for the in vitro assembly process of the 50S ribosomal subunit. It is not involved in the protein synthesizing functions of that subunit. The chain is Large ribosomal subunit protein bL20 from Xylella fastidiosa (strain M12).